The chain runs to 347 residues: MSFTEKPAVTKERKEFYSKLESHDLAPLWEVLNEVVTTKPKSNCAPHLWEFEVAKEFLMEAGTLITAKEAERRVLILENPGLKGLSRITTSLYAGLQLILPGEVAPTHRHSQSALRFVVDGGGACTSVDGERTTMQVGDFVITPPWAWHDHVNDSDKPMIWMDGLDLPMVTLFDTSFAEGYGEDIQEITRPNGDSLARYGANMLPVDFKQKGLSSPIFNYPYERSREALEAMKKANEWDPCHGLKMQYINPLDGMAAMPTISSFIQLLPKEFRTQTYRSTDATVFSVIEGQGKTRIGDKVFFWKAKDTFVVPSWYPVEHEASSDAVLFSYSDRVAQQKLGFWRESRN.

One can recognise a Cupin type-2 domain in the interval 96–163 (LQLILPGEVA…DSDKPMIWMD (68 aa)).

The protein belongs to the gentisate 1,2-dioxygenase family. As to quaternary structure, homotetramer. Fe(2+) serves as cofactor.

It carries out the reaction 2,5-dihydroxybenzoate + O2 = 3-maleylpyruvate + H(+). With respect to regulation, completely inhibited by the presence of 5 mM Cu(2+). Partially inhibited with 5 mM Mn(2+), Zn(2+) or EDTA. In terms of biological role, involved in the degradation of gentisate. Catalyzes the conversion of gentisate (2,5-dihydroxybenzoate) to maleylpyruvate. Exhibits broad substrate specificities towards alkyl and halogenated gentisates. This Aquipseudomonas alcaligenes (Pseudomonas alcaligenes) protein is Gentisate 1,2 dioxygenase 1.